Here is a 315-residue protein sequence, read N- to C-terminus: 4-hydroxy-3-methylbut-2-enyl diphosphate reductase (315 aa).

Cysteine 12 serves as a coordination point for [4Fe-4S] cluster. (2E)-4-hydroxy-3-methylbut-2-enyl diphosphate contacts are provided by histidine 41 and histidine 74. Dimethylallyl diphosphate is bound by residues histidine 41 and histidine 74. 2 residues coordinate isopentenyl diphosphate: histidine 41 and histidine 74. Cysteine 96 contributes to the [4Fe-4S] cluster binding site. Histidine 124 is a (2E)-4-hydroxy-3-methylbut-2-enyl diphosphate binding site. Histidine 124 is a binding site for dimethylallyl diphosphate. Histidine 124 is an isopentenyl diphosphate binding site. Residue glutamate 126 is the Proton donor of the active site. Threonine 168 contacts (2E)-4-hydroxy-3-methylbut-2-enyl diphosphate. Cysteine 198 is a [4Fe-4S] cluster binding site. 4 residues coordinate (2E)-4-hydroxy-3-methylbut-2-enyl diphosphate: serine 226, serine 227, asparagine 228, and serine 270. Dimethylallyl diphosphate-binding residues include serine 226, serine 227, asparagine 228, and serine 270. Residues serine 226, serine 227, asparagine 228, and serine 270 each coordinate isopentenyl diphosphate.

It belongs to the IspH family. [4Fe-4S] cluster is required as a cofactor.

The catalysed reaction is isopentenyl diphosphate + 2 oxidized [2Fe-2S]-[ferredoxin] + H2O = (2E)-4-hydroxy-3-methylbut-2-enyl diphosphate + 2 reduced [2Fe-2S]-[ferredoxin] + 2 H(+). It carries out the reaction dimethylallyl diphosphate + 2 oxidized [2Fe-2S]-[ferredoxin] + H2O = (2E)-4-hydroxy-3-methylbut-2-enyl diphosphate + 2 reduced [2Fe-2S]-[ferredoxin] + 2 H(+). The protein operates within isoprenoid biosynthesis; dimethylallyl diphosphate biosynthesis; dimethylallyl diphosphate from (2E)-4-hydroxy-3-methylbutenyl diphosphate: step 1/1. It functions in the pathway isoprenoid biosynthesis; isopentenyl diphosphate biosynthesis via DXP pathway; isopentenyl diphosphate from 1-deoxy-D-xylulose 5-phosphate: step 6/6. In terms of biological role, catalyzes the conversion of 1-hydroxy-2-methyl-2-(E)-butenyl 4-diphosphate (HMBPP) into a mixture of isopentenyl diphosphate (IPP) and dimethylallyl diphosphate (DMAPP). Acts in the terminal step of the DOXP/MEP pathway for isoprenoid precursor biosynthesis. The chain is 4-hydroxy-3-methylbut-2-enyl diphosphate reductase from Pseudomonas fluorescens (strain ATCC BAA-477 / NRRL B-23932 / Pf-5).